The sequence spans 106 residues: ATP-dependent Clp protease adapter protein ClpS (106 aa).

It belongs to the ClpS family. In terms of assembly, binds to the N-terminal domain of the chaperone ClpA.

Its function is as follows. Involved in the modulation of the specificity of the ClpAP-mediated ATP-dependent protein degradation. The polypeptide is ATP-dependent Clp protease adapter protein ClpS (Escherichia coli O127:H6 (strain E2348/69 / EPEC)).